A 501-amino-acid polypeptide reads, in one-letter code: Flagellin (501 aa).

The protein belongs to the bacterial flagellin family.

The protein localises to the secreted. It localises to the bacterial flagellum. In terms of biological role, flagellin is the subunit protein which polymerizes to form the filaments of bacterial flagella. In Salmonella choleraesuis (strain SC-B67), this protein is Flagellin (fliC).